Reading from the N-terminus, the 262-residue chain is Homeobox protein vent1 (262 aa).

Composition is skewed to basic and acidic residues over residues 16-26 and 44-55; these read REEAPDGKDSV and YAKEIPRRKDGQ. The disordered stretch occupies residues 16 to 129; that stretch reads REEAPDGKDS…KSPKSDLQRR (114 aa). The span at 58–79 shows a compositional bias: polar residues; the sequence is GEITSFQCSSEEARNRQFSNPS. A compositionally biased stretch (basic and acidic residues) spans 114–128; the sequence is DTEHRSKSPKSDLQR. Residues 127 to 186 constitute a DNA-binding region (homeobox); sequence QRRLRTAFTPQQITRLEQAFNKQRYLGASERKKLATSLQLSEIQVKTWFQNRRMKLKRQI.

The protein resides in the nucleus. Functionally, transcriptional repressor. Cooperates with vent2 in a ventral signaling pathway downstream of bmp4, which antagonizes the Spemann organizer and dorsal mesoderm formation, and leads to ventral mesoderm formation. Acts downstream of bmp4 to repress transcription of foxa4-B/XFD-1'. Binds to DNA with preference for the target sequence 5'-CTATT[T/C]G-3'. Also binds 5'-TGCATTTTG-3' at a lower frequency, and occasionally 5'-TTGATC-3'. Binds to the homeobox 2 (HBX2) repressor element in the promoter of the myf5 gene. Cooperates with vent2 to repress myf5 expression in the ventral domain. The sequence is that of Homeobox protein vent1 from Xenopus tropicalis (Western clawed frog).